A 310-amino-acid polypeptide reads, in one-letter code: Terpene synthase 6 (310 aa).

The short motif at 93 to 98 is the DDxx(x)D/E motif element; that stretch reads DDFYFE. The short motif at 222 to 230 is the NDxxSxxxD/E motif element; that stretch reads NDCYSFNKE.

Belongs to the terpene synthase family.

It carries out the reaction (2E,6E)-farnesyl diphosphate = (E)-beta-farnesene + diphosphate. The enzyme catalyses (2E,6E)-farnesyl diphosphate = (1S,2S,4R)-beta-elemene + diphosphate. It catalyses the reaction (2E,6E)-farnesyl diphosphate = (3E,6E)-alpha-farnesene + diphosphate. In terms of biological role, terpene synthase that converts its substrate farnesyl diphosphate (FPP) into the sesquiterpenes beta-elemene, (E)-beta-farnesene and (E,E)-alpha-farnesene. This chain is Terpene synthase 6, found in Dictyostelium purpureum (Slime mold).